The primary structure comprises 1332 residues: DEMETER-like protein 2 (1332 aa).

Basic and acidic residues predominate over residues 1–23 (MEVEGEVREKEARVKGRQPETEV). 3 disordered regions span residues 1–29 (MEVE…GLPQ), 137–242 (VSTS…TSEE), and 280–317 (VEGS…KKTD). The span at 137-153 (VSTSTQRTEPESPQITL) shows a compositional bias: polar residues. Residues 223-236 (SKAGIKKSSIAATA) show a composition bias toward low complexity. Positions 301–312 (PKGRRGQRRSNG) are enriched in basic residues. The DEMETER stretch occupies residues 497–595 (KVQLDPETSR…AYMDLAAEFP (99 aa)). Residues 739-753 (HQQDPESTIQTQDQQ) are compositionally biased toward polar residues. Residues 739–810 (HQQDPESTIQ…GGRKRERTER (72 aa)) are disordered. Residues 763–777 (KNRKKPTTSKPKKKS) show a composition bias toward basic residues. Residues 787–810 (KSVDWDSLRKEAESGGRKRERTER) show a composition bias toward basic and acidic residues. [4Fe-4S] cluster contacts are provided by Cys970, Cys977, Cys980, and Cys986.

This sequence belongs to the DNA glycosylase family. DEMETER subfamily. The cofactor is [4Fe-4S] cluster.

The protein localises to the nucleus. Potential transcriptional activator that may act by nicking the target promoter. Catalyzes the release of 5-methylcytosine (5-meC) from DNA by a glycosylase/lyase mechanism. The sequence is that of DEMETER-like protein 2 (DML2) from Arabidopsis thaliana (Mouse-ear cress).